A 236-amino-acid chain; its full sequence is Ureidoacrylate amidohydrolase RutB (236 aa).

The active-site Proton acceptor is aspartate 24. Lysine 133 is a catalytic residue. The Nucleophile role is filled by cysteine 166.

Belongs to the isochorismatase family. RutB subfamily.

The catalysed reaction is (Z)-3-ureidoacrylate + H2O + H(+) = (Z)-3-aminoacrylate + NH4(+) + CO2. The enzyme catalyses (Z)-3-ureidoacrylate + H2O = (Z)-3-aminoacrylate + carbamate + H(+). It carries out the reaction (Z)-2-methylureidoacrylate + H2O + H(+) = (Z)-2-methylaminoacrylate + NH4(+) + CO2. Hydrolyzes ureidoacrylate to form aminoacrylate and carbamate. The carbamate hydrolyzes spontaneously, thereby releasing one of the nitrogen atoms of the pyrimidine ring as ammonia and one of its carbon atoms as CO2. This is Ureidoacrylate amidohydrolase RutB from Klebsiella variicola (strain At-22).